The chain runs to 353 residues: Phosphate acyltransferase (353 aa).

Belongs to the PlsX family. In terms of assembly, homodimer. Probably interacts with PlsY.

The protein resides in the cytoplasm. The catalysed reaction is a fatty acyl-[ACP] + phosphate = an acyl phosphate + holo-[ACP]. The protein operates within lipid metabolism; phospholipid metabolism. In terms of biological role, catalyzes the reversible formation of acyl-phosphate (acyl-PO(4)) from acyl-[acyl-carrier-protein] (acyl-ACP). This enzyme utilizes acyl-ACP as fatty acyl donor, but not acyl-CoA. The polypeptide is Phosphate acyltransferase (Ralstonia pickettii (strain 12J)).